Here is a 549-residue protein sequence, read N- to C-terminus: Glutamyl-tRNA(Gln) amidotransferase subunit B, chloroplastic/mitochondrial (549 aa).

The protein belongs to the GatB/GatE family. GatB subfamily. Subunit of the heterotrimeric GatCAB amidotransferase (AdT) complex, composed of A, B and C subunits.

It localises to the mitochondrion. Its subcellular location is the plastid. The protein localises to the chloroplast. It catalyses the reaction L-glutamyl-tRNA(Gln) + L-glutamine + ATP + H2O = L-glutaminyl-tRNA(Gln) + L-glutamate + ADP + phosphate + H(+). Allows the formation of correctly charged Gln-tRNA(Gln) through the transamidation of misacylated Glu-tRNA(Gln) in chloroplasts and mitochondria. The reaction takes place in the presence of glutamine and ATP through an activated gamma-phospho-Glu-tRNA(Gln). This Ricinus communis (Castor bean) protein is Glutamyl-tRNA(Gln) amidotransferase subunit B, chloroplastic/mitochondrial.